The chain runs to 223 residues: Putative NAD(P)H nitroreductase SAUSA300_2462 (223 aa).

It belongs to the nitroreductase family. FMN is required as a cofactor.

This chain is Putative NAD(P)H nitroreductase SAUSA300_2462, found in Staphylococcus aureus (strain USA300).